Reading from the N-terminus, the 123-residue chain is Small ribosomal subunit protein uS12c (123 aa).

This sequence belongs to the universal ribosomal protein uS12 family. As to quaternary structure, part of the 30S ribosomal subunit.

Its subcellular location is the plastid. The protein localises to the chloroplast. Its function is as follows. With S4 and S5 plays an important role in translational accuracy. Located at the interface of the 30S and 50S subunits. The protein is Small ribosomal subunit protein uS12c (rps12) of Oenothera elata subsp. hookeri (Hooker's evening primrose).